Reading from the N-terminus, the 199-residue chain is BREX protein BrxA (199 aa).

The protein belongs to the BrxA family.

In terms of biological role, BREX systems (bacteriophage exclusion) provide immunity against bacteriophage. Part of a type 1 BREX system which protects against dsDNA phage. This system allows phage adsorption but prevents phage DNA replication, without degradation of the phage DNA. Methylation of bacterial DNA by PglX guides self/non-self discrimination. The protein is BREX protein BrxA of Paramagnetospirillum magneticum (strain ATCC 700264 / AMB-1) (Magnetospirillum magneticum).